A 324-amino-acid polypeptide reads, in one-letter code: 3-hydroxyisobutyrate dehydrogenase, mitochondrial (324 aa).

The N-terminal 25 residues, 1–25 (MSLRVMSPAMLNAWSQTLVRAMSTQ), are a transit peptide targeting the mitochondrion. NAD(+) is bound by residues 29–58 (KNIG…HVFD), 92–93 (LP), and Thr121. The active site involves Lys196. Lys271 provides a ligand contact to NAD(+).

The protein belongs to the HIBADH-related family. 3-hydroxyisobutyrate dehydrogenase subfamily.

It is found in the mitochondrion. It carries out the reaction 3-hydroxy-2-methylpropanoate + NAD(+) = 2-methyl-3-oxopropanoate + NADH + H(+). Its pathway is amino-acid degradation; L-valine degradation. This is 3-hydroxyisobutyrate dehydrogenase, mitochondrial from Drosophila melanogaster (Fruit fly).